The chain runs to 83 residues: Putative membrane protein insertion efficiency factor (83 aa).

Residues 64–83 (GGFDPVPLKKDKNSKTTHHH) form a disordered region.

It belongs to the UPF0161 family.

Its subcellular location is the cell membrane. In terms of biological role, could be involved in insertion of integral membrane proteins into the membrane. The sequence is that of Putative membrane protein insertion efficiency factor from Staphylococcus epidermidis (strain ATCC 12228 / FDA PCI 1200).